A 396-amino-acid chain; its full sequence is Argininosuccinate synthase (396 aa).

9-17 lines the ATP pocket; it reads AFSGGLDTT. L-citrulline is bound at residue Y86. G116 lines the ATP pocket. Residues T118, N122, and D123 each coordinate L-aspartate. N122 is a binding site for L-citrulline. L-citrulline is bound by residues R126, S172, S181, E254, and Y266.

This sequence belongs to the argininosuccinate synthase family. Type 1 subfamily. In terms of assembly, homotetramer.

It localises to the cytoplasm. The enzyme catalyses L-citrulline + L-aspartate + ATP = 2-(N(omega)-L-arginino)succinate + AMP + diphosphate + H(+). It participates in amino-acid biosynthesis; L-arginine biosynthesis; L-arginine from L-ornithine and carbamoyl phosphate: step 2/3. In Halobacterium salinarum (strain ATCC 700922 / JCM 11081 / NRC-1) (Halobacterium halobium), this protein is Argininosuccinate synthase.